The following is a 609-amino-acid chain: Glutamine--fructose-6-phosphate aminotransferase [isomerizing] (609 aa).

Catalysis depends on C2, which acts as the Nucleophile; for GATase activity. Positions 2–217 (CGIVGAIAGR…EGDTAELRRD (216 aa)) constitute a Glutamine amidotransferase type-2 domain. SIS domains are found at residues 284–425 (TADA…LQGR) and 458–599 (WAER…VDKP). K604 (for Fru-6P isomerization activity) is an active-site residue.

In terms of assembly, homodimer.

The protein localises to the cytoplasm. The catalysed reaction is D-fructose 6-phosphate + L-glutamine = D-glucosamine 6-phosphate + L-glutamate. Its function is as follows. Catalyzes the first step in hexosamine metabolism, converting fructose-6P into glucosamine-6P using glutamine as a nitrogen source. This is Glutamine--fructose-6-phosphate aminotransferase [isomerizing] from Xanthomonas campestris pv. campestris (strain ATCC 33913 / DSM 3586 / NCPPB 528 / LMG 568 / P 25).